The primary structure comprises 608 residues: Translation initiation factor RLI1 (608 aa).

2 consecutive 4Fe-4S ferredoxin-type domains span residues 7-39 (RIAI…KLCI) and 46-75 (KIAF…IINL). ABC transporter domains follow at residues 70–320 (IQII…FLDG) and 345–568 (LQND…LKNL). 110–117 (GTNGIGKS) contributes to the ATP binding site. At Ser349 the chain carries Phosphoserine. 385-392 (GENGTGKT) contributes to the ATP binding site.

It belongs to the ABC transporter superfamily. ABCE family. Component of the multifactor complex (MFC) composed of at least RLI1, the eIF2 subunit SUI2, TIF5/eIF5, and the eIF3 subunits PRT1, HCR1, NIP1, RPG1, TIF34 and TIF35. The complex associates with pre-initiation complexes. Interacts with the complex YAE1:LTO1; the complex bridges the interaction between the CIA complex and RLI1.

It is found in the cytoplasm. It localises to the nucleus. Component of the multifactor complex (MFC) involved in translation initiation. Required for the binding of MFC to the 40S ribosome. Required for the processing and nuclear export of the 60S and 40S ribosomal subunits. The protein is Translation initiation factor RLI1 (RLI1) of Saccharomyces cerevisiae (strain ATCC 204508 / S288c) (Baker's yeast).